The sequence spans 628 residues: uncharacterized protein (628 aa).

2 disordered regions span residues 1–65 and 80–125; these read MDTN…ISSA and SLRN…VSLS. Residues 12–21 are compositionally biased toward low complexity; the sequence is ISPSIASSFP. Positions 25–37 are enriched in polar residues; that stretch reads PFSSQNSTTSNPE. Low complexity-rich tracts occupy residues 48-64 and 87-102; these read SSII…NISS and SPHI…SSSS. The segment covering 103-116 has biased composition (basic and acidic residues); it reads DLDKSMLDEKHPDS. 12 helical membrane-spanning segments follow: residues 157 to 177, 203 to 223, 230 to 250, 259 to 279, 294 to 314, 324 to 344, 417 to 437, 454 to 474, 483 to 503, 511 to 531, 542 to 562, and 583 to 603; these read IITC…SISL, VGTG…NLLM, LWLS…AVLG, FIAL…GFAF, IGWY…LSAA, LYGY…QGLF, LWPP…LVNY, VSLL…TVLP, MLFF…TTFV, VGLL…MTWV, VGVA…SVVA, and MCGM…VQKF.

This sequence belongs to the major facilitator superfamily. Allantoate permease family.

The protein resides in the membrane. This is an uncharacterized protein from Schizosaccharomyces pombe (strain 972 / ATCC 24843) (Fission yeast).